Here is a 482-residue protein sequence, read N- to C-terminus: Probable cytosol aminopeptidase (482 aa).

The Mn(2+) site is built by Lys-251 and Asp-256. The active site involves Lys-263. The Mn(2+) site is built by Asp-274, Asp-333, and Glu-335. Arg-337 is a catalytic residue.

This sequence belongs to the peptidase M17 family. Requires Mn(2+) as cofactor.

The protein resides in the cytoplasm. It catalyses the reaction Release of an N-terminal amino acid, Xaa-|-Yaa-, in which Xaa is preferably Leu, but may be other amino acids including Pro although not Arg or Lys, and Yaa may be Pro. Amino acid amides and methyl esters are also readily hydrolyzed, but rates on arylamides are exceedingly low.. The enzyme catalyses Release of an N-terminal amino acid, preferentially leucine, but not glutamic or aspartic acids.. Functionally, presumably involved in the processing and regular turnover of intracellular proteins. Catalyzes the removal of unsubstituted N-terminal amino acids from various peptides. This is Probable cytosol aminopeptidase from Acinetobacter baumannii (strain SDF).